A 495-amino-acid chain; its full sequence is Dipeptide and tripeptide permease A (495 aa).

The Cytoplasmic segment spans residues 1 to 20 (MTTSALNPLRQPKPFYLIFS). The helical transmembrane segment at 21–41 (IEFWERFGFYGLQGILAVYLV) threads the bilayer. Residues 42-51 (KALGLREADS) are Periplasmic-facing. A helical transmembrane segment spans residues 52–72 (FTLFSSFIALVYGLIAVGGWL). Residues 73–81 (GDKVLGTKR) lie on the Cytoplasmic side of the membrane. Helical transmembrane passes span 82 to 102 (TILLGALVLTAGYAMVTASSE) and 103 to 123 (HISLLYLGMGTIAVGNGLFKA). At 124-145 (NPSSLLSKCYEENDPRLDGAFT) the chain is on the periplasmic side. The helical transmembrane segment at 146–166 (MYYMAINIGSLLSMLATPWLA) threads the bilayer. Over 167–171 (DQFGY) the chain is Cytoplasmic. Residues 172 to 192 (AHAFALSVVGMLITVANFILM) traverse the membrane as a helical segment. The Periplasmic portion of the chain corresponds to 193-209 (QGWVKNYGSDADFRTPR). The helical transmembrane segment at 210–230 (LSTWLAVLAGVVAACAAAALL) threads the bilayer. Topologically, residues 231–232 (LK) are cytoplasmic. Residues 233–253 (HEIIANVVLAVLSIGVVGLYV) form a helical membrane-spanning segment. The Periplasmic segment spans residues 254 to 266 (KETLLLKGAERKK). The helical transmembrane segment at 267–287 (MIVAAILMLQATVFFVLYNQM) threads the bilayer. Topologically, residues 288–312 (PLSLNFFAIHNTEHMLFGIPVQPEQ) are cytoplasmic. Residues 313–333 (FQSLNPFWIMLASPLLALCYN) traverse the membrane as a helical segment. The Periplasmic segment spans residues 334-344 (KLGNRLPMPHK). Residues 345–365 (FAIGMVLCAGAFLVLPLGAKY) form a helical membrane-spanning segment. The Cytoplasmic portion of the chain corresponds to 366–375 (ANAQGLVSSN). Residues 376 to 396 (WMVLSYLLQSVGELLISGLGL) traverse the membrane as a helical segment. The Periplasmic segment spans residues 397–409 (AMVAQLVPQRLMG). The helical transmembrane segment at 410-430 (FIMGAWFLTSAASSVIAGWVA) threads the bilayer. The Cytoplasmic portion of the chain corresponds to 431–451 (GLTAAPDNVTNPLATLEIYSR). Residues 452-472 (VFTQIGVVTGVIAVVTIIIAP) traverse the membrane as a helical segment. Over 473 to 495 (WLHRMTLDEKPAHPEHEMALDAR) the chain is Periplasmic.

Belongs to the major facilitator superfamily. Proton-dependent oligopeptide transporter (POT/PTR) (TC 2.A.17) family. DtpA subfamily.

The protein localises to the cell inner membrane. Its function is as follows. Proton-dependent permease that transports di- and tripeptides. The sequence is that of Dipeptide and tripeptide permease A from Chromobacterium violaceum (strain ATCC 12472 / DSM 30191 / JCM 1249 / CCUG 213 / NBRC 12614 / NCIMB 9131 / NCTC 9757 / MK).